Consider the following 512-residue polypeptide: Maturase K (512 aa).

It belongs to the intron maturase 2 family. MatK subfamily.

The protein resides in the plastid. It localises to the chloroplast. Usually encoded in the trnK tRNA gene intron. Probably assists in splicing its own and other chloroplast group II introns. The sequence is that of Maturase K from Lemna gibba (Swollen duckweed).